Reading from the N-terminus, the 549-residue chain is Glucose-6-phosphate isomerase (549 aa).

Glutamate 353 serves as the catalytic Proton donor. Catalysis depends on residues histidine 384 and lysine 513.

Belongs to the GPI family.

The protein resides in the cytoplasm. It carries out the reaction alpha-D-glucose 6-phosphate = beta-D-fructose 6-phosphate. The protein operates within carbohydrate biosynthesis; gluconeogenesis. It participates in carbohydrate degradation; glycolysis; D-glyceraldehyde 3-phosphate and glycerone phosphate from D-glucose: step 2/4. Catalyzes the reversible isomerization of glucose-6-phosphate to fructose-6-phosphate. The chain is Glucose-6-phosphate isomerase from Brucella ovis (strain ATCC 25840 / 63/290 / NCTC 10512).